The sequence spans 893 residues: DNA gyrase subunit A (893 aa).

Residues 35-501 (LPDVRDGLKP…GLEDLEDEDL (467 aa)) form the Topo IIA-type catalytic domain. Catalysis depends on Tyr123, which acts as the O-(5'-phospho-DNA)-tyrosine intermediate. Positions 528 to 534 (QNRGGRG) match the GyrA-box motif. The segment at 810–893 (VNEEDDNEEN…ASDNEEDSDE (84 aa)) is disordered. 2 stretches are compositionally biased toward acidic residues: residues 812 to 821 (EEDDNEENAD) and 852 to 862 (DAEMESVESPE). Basic and acidic residues predominate over residues 863–879 (NDDRIDIRQDFMDRVNE). The segment covering 880–893 (DIESASDNEEDSDE) has biased composition (acidic residues).

It belongs to the type II topoisomerase GyrA/ParC subunit family. In terms of assembly, heterotetramer, composed of two GyrA and two GyrB chains. In the heterotetramer, GyrA contains the active site tyrosine that forms a transient covalent intermediate with DNA, while GyrB binds cofactors and catalyzes ATP hydrolysis.

It is found in the cytoplasm. The catalysed reaction is ATP-dependent breakage, passage and rejoining of double-stranded DNA.. In terms of biological role, a type II topoisomerase that negatively supercoils closed circular double-stranded (ds) DNA in an ATP-dependent manner to modulate DNA topology and maintain chromosomes in an underwound state. Negative supercoiling favors strand separation, and DNA replication, transcription, recombination and repair, all of which involve strand separation. Also able to catalyze the interconversion of other topological isomers of dsDNA rings, including catenanes and knotted rings. Type II topoisomerases break and join 2 DNA strands simultaneously in an ATP-dependent manner. The protein is DNA gyrase subunit A of Staphylococcus epidermidis (strain ATCC 12228 / FDA PCI 1200).